Consider the following 150-residue polypeptide: C-type lectin 37Db (150 aa).

Positions 1-20 are cleaved as a signal peptide; that stretch reads MMVKLLLLFLVCWSALPLES. One can recognise a C-type lectin domain in the interval 31–148; sequence IGEKQYYISL…CYSSVAFICQ (118 aa). Cystine bridges form between Cys-52–Cys-147 and Cys-122–Cys-139. 2 N-linked (GlcNAc...) asparagine glycosylation sites follow: Asn-107 and Asn-115.

The protein resides in the secreted. In terms of biological role, galactose-specific lectin that displays calcium-dependent activity. Binds to the surface of hemocytes and enhances hemocyte encapsulation and melanization. This is likely by interacting with carbohydrates on the surface of the hemocytes. Also displays agglutination activity against the Gram-negative bacterium E.coli. The chain is C-type lectin 37Db from Drosophila melanogaster (Fruit fly).